The sequence spans 332 residues: DNA-directed RNA polymerase subunit alpha (332 aa).

The alpha N-terminal domain (alpha-NTD) stretch occupies residues 1 to 232 (MQVSNFLKPR…DQLTAFVELE (232 aa)). The segment at 246–332 (IDPVLLQPID…LREEETKVTA (87 aa)) is alpha C-terminal domain (alpha-CTD).

This sequence belongs to the RNA polymerase alpha chain family. In terms of assembly, homodimer. The RNAP catalytic core consists of 2 alpha, 1 beta, 1 beta' and 1 omega subunit. When a sigma factor is associated with the core the holoenzyme is formed, which can initiate transcription.

It carries out the reaction RNA(n) + a ribonucleoside 5'-triphosphate = RNA(n+1) + diphosphate. Functionally, DNA-dependent RNA polymerase catalyzes the transcription of DNA into RNA using the four ribonucleoside triphosphates as substrates. In Nitrosococcus oceani (strain ATCC 19707 / BCRC 17464 / JCM 30415 / NCIMB 11848 / C-107), this protein is DNA-directed RNA polymerase subunit alpha.